The sequence spans 359 residues: UPF0283 membrane protein RL2646 (359 aa).

Residues methionine 1 to threonine 48 form a disordered region. Residues threonine 23 to serine 42 are compositionally biased toward basic and acidic residues. 2 helical membrane passes run phenylalanine 77–threonine 97 and leucine 111–isoleucine 131.

This sequence belongs to the UPF0283 family.

Its subcellular location is the cell inner membrane. The sequence is that of UPF0283 membrane protein RL2646 from Rhizobium johnstonii (strain DSM 114642 / LMG 32736 / 3841) (Rhizobium leguminosarum bv. viciae).